The following is a 134-amino-acid chain: Two-component response regulator ORR5 (134 aa).

The Response regulatory domain maps to 16-133; that stretch reads HVLAVDDSSV…DVSRLCSRVL (118 aa). Asp66 bears the 4-aspartylphosphate mark.

Belongs to the ARR family. Type-A subfamily. Post-translationally, two-component system major event consists of a His-to-Asp phosphorelay between a sensor histidine kinase (HK) and a response regulator (RR). In plants, the His-to-Asp phosphorelay involves an additional intermediate named Histidine-containing phosphotransfer protein (HPt). This multistep phosphorelay consists of a His-Asp-His-Asp sequential transfer of a phosphate group between first a His and an Asp of the HK protein, followed by the transfer to a conserved His of the HPt protein and finally the transfer to an Asp in the receiver domain of the RR protein. As to expression, expressed in mature leaves and shoots, and at low levels in roots and flowers.

Functionally, functions as a response regulator involved in His-to-Asp phosphorelay signal transduction system. Phosphorylation of the Asp residue in the receiver domain activates the ability of the protein to promote the transcription of target genes. Type-A response regulators seem to act as negative regulators of the cytokinin signaling. This is Two-component response regulator ORR5 from Oryza sativa subsp. indica (Rice).